Here is a 310-residue protein sequence, read N- to C-terminus: MSNPLYNKNIISITDLSRAELELIVSTANELKQHPRPDLLKNKVIASCFFEASTRTRLSFETAVQRLGGSVIGFPDSGNTSLGKKGETLADSVQVISSYSDAFFMRHNQEGAARLASEFSSVPVINGGDGSNQHPTQTLLDLFSIYETQGTLDKLQVAFVGDLKYGRTVHSLTQALSLFDCEFHFVAPPALSMPEYIIDELKEKGCTFTQYDSLDGVLSKLDILYMTRVQKERFDETEYQHMKSSFILTAQMFEGVKDNLKVLHPLPRVDEITTDVDSTPYAYYFQQAKNGVYARQALLALVLTNEFGDK.

Carbamoyl phosphate contacts are provided by R55 and T56. K85 is a binding site for L-aspartate. Positions 106, 134, and 137 each coordinate carbamoyl phosphate. L-aspartate contacts are provided by R167 and R228. Carbamoyl phosphate contacts are provided by L266 and P267.

It belongs to the aspartate/ornithine carbamoyltransferase superfamily. ATCase family. As to quaternary structure, heterododecamer (2C3:3R2) of six catalytic PyrB chains organized as two trimers (C3), and six regulatory PyrI chains organized as three dimers (R2).

The catalysed reaction is carbamoyl phosphate + L-aspartate = N-carbamoyl-L-aspartate + phosphate + H(+). Its pathway is pyrimidine metabolism; UMP biosynthesis via de novo pathway; (S)-dihydroorotate from bicarbonate: step 2/3. In terms of biological role, catalyzes the condensation of carbamoyl phosphate and aspartate to form carbamoyl aspartate and inorganic phosphate, the committed step in the de novo pyrimidine nucleotide biosynthesis pathway. This Shewanella halifaxensis (strain HAW-EB4) protein is Aspartate carbamoyltransferase catalytic subunit 1.